A 344-amino-acid chain; its full sequence is Heat-inducible transcription repressor HrcA (344 aa).

It belongs to the HrcA family.

Its function is as follows. Negative regulator of class I heat shock genes (grpE-dnaK-dnaJ and groELS operons). Prevents heat-shock induction of these operons. The polypeptide is Heat-inducible transcription repressor HrcA (Streptococcus pneumoniae (strain P1031)).